Here is an 816-residue protein sequence, read N- to C-terminus: MKSREIEYFMEEIKDTVSKEKKRSKNSGGILPHFDKPVRVPLIAVPSHPVFPSMFIPIVIVSDIDMKAVDYVIKGNGIISLFVLRDKFLEKSGNNKDGKLTINYQKDIYSVGVTAKIVKKINLPDGGYNIFVSTIDRVKFVKVVLNEDFPIIEVDYLKQIPIKKYDVNLKAIYSSILLKTKEIFSHRKMPEFQLNMVNIEDKGRLCDVVAGMIASSKESHQEVLETLSVKDRLKKVLELLYEELNLIEIQNKIAKGIQEKLEKQQKEFFLKEQLKAIKTELGVGDEKNSEFLKMKSKIDALALKGEALDAVGRELEKFSFLERHSSEYIVVRNYLELITNLPWEDTKVDFDKFNLQRAEKILDKTHYGMREVKDRILEYISVLKLRKSQKGAIMLLVGPPGVGKTSIGAAIAEVLNTKFFRFSVGGIRDESEIKGHRRTYVGALPGKIIQGLRITKTNSPVFLIDEIDKVSSSHYGDPFSVLLEVLDPEQNVNFRDHYLDLPFDISNVFFILTANSLETIPTPLLNRMEVIQLSGYVDDEKIEIARKYLIPKVLKENGVDKDSLKFQSSSLVQIAREYARDNGLRNFEKYLKQIVRKIARKLVEDQSVKAYQISKENLEEYIGIPVFRKEKFLDKAMSPGMVMGLAWTNYGGSTLIIETVKTESKSPGIKLTGRLGDVMKESANIAFTYVNSISNELKVHKSFFEKYMIHLHIPEGATPKDGPSAGITIASAFISLALNKTVRPNLAMTGELSLTGNVMAIGGLKAKIIAAKRNGVEHIIIPKANKVDLDDIPINIKNGINFHLVDSMKEVIKLLF.

The 205-residue stretch at 40-244 folds into the Lon N-terminal domain; it reads VPLIAVPSHP…KVLELLYEEL (205 aa). 398 to 405 provides a ligand contact to ATP; the sequence is GPPGVGKT. The Lon proteolytic domain maps to 636–816; that stretch reads AMSPGMVMGL…SMKEVIKLLF (181 aa). Residues serine 724 and lysine 767 contribute to the active site.

The protein belongs to the peptidase S16 family. Homohexamer. Organized in a ring with a central cavity.

It localises to the cytoplasm. It carries out the reaction Hydrolysis of proteins in presence of ATP.. In terms of biological role, ATP-dependent serine protease that mediates the selective degradation of mutant and abnormal proteins as well as certain short-lived regulatory proteins. Required for cellular homeostasis and for survival from DNA damage and developmental changes induced by stress. Degrades polypeptides processively to yield small peptide fragments that are 5 to 10 amino acids long. Binds to DNA in a double-stranded, site-specific manner. This is Lon protease from Borrelia duttonii (strain Ly).